A 267-amino-acid chain; its full sequence is Hydrolase FUB4 (267 aa).

Catalysis depends on charge relay system residues Ser-93, Asp-183, and His-243.

Belongs to the AB hydrolase 3 family.

It functions in the pathway mycotoxin biosynthesis. Hydrolase; part of the gene cluster that mediates the biosynthesis of fusaric acid, a mycotoxin with low to moderate toxicity to animals and humans, but with high phytotoxic properties. L-aspartate is suggested as fusaric acid amino acid precursor that is activated and further processed to O-acetyl-L-homoserine by cluster enzymes aspartate kinase FUB3 and homoserine O-acetyltransferase FUB5, as well as enzymes of the primary metabolism. The polyketide synthase (PKS) FUB1 generates the triketide trans-2-hexenal which is presumptively released by the hydrolase FUB4 and linked to the NRPS-bound amino acid precursor by NAD(P)-dependent dehydrogenase FUB6. FUB1, FUB4, and the non-canonical NRPS Fub8 may form an enzyme complex. Further processing of the NRPS-bound intermediate might be carried out by FUB6 and the sulfhydrylase FUB7, enabling a spontaneous electrocyclization to close the carbon backbone of fusaric acid. Dihydrofusaric acid is likely to be released via reduction by the thioester reductase (TR) domain of FUB8 whereupon the final oxidation to fusaric acid may (also) be performed by the FMN-dependent dehydrogenase FUB9. The chain is Hydrolase FUB4 from Gibberella moniliformis (strain M3125 / FGSC 7600) (Maize ear and stalk rot fungus).